A 103-amino-acid chain; its full sequence is uncharacterized protein (103 aa).

Residues 37-57 traverse the membrane as a helical segment; that stretch reads FILLSSLLIGGLLITIACYHI.

The protein resides in the membrane. This is an uncharacterized protein from Saccharomyces cerevisiae (strain ATCC 204508 / S288c) (Baker's yeast).